The chain runs to 209 residues: Uracil phosphoribosyltransferase (209 aa).

5-phospho-alpha-D-ribose 1-diphosphate is bound by residues R79, R104, and 131–139 (DPMLATGGS). Residues I194 and 199–201 (GDA) each bind uracil. D200 is a binding site for 5-phospho-alpha-D-ribose 1-diphosphate.

This sequence belongs to the UPRTase family. Mg(2+) is required as a cofactor.

It carries out the reaction UMP + diphosphate = 5-phospho-alpha-D-ribose 1-diphosphate + uracil. It functions in the pathway pyrimidine metabolism; UMP biosynthesis via salvage pathway; UMP from uracil: step 1/1. Allosterically activated by GTP. Functionally, catalyzes the conversion of uracil and 5-phospho-alpha-D-ribose 1-diphosphate (PRPP) to UMP and diphosphate. The chain is Uracil phosphoribosyltransferase from Lactiplantibacillus plantarum (strain ATCC BAA-793 / NCIMB 8826 / WCFS1) (Lactobacillus plantarum).